We begin with the raw amino-acid sequence, 594 residues long: Adenine deaminase 1 (594 aa).

It belongs to the metallo-dependent hydrolases superfamily. Adenine deaminase family. It depends on Mn(2+) as a cofactor.

It carries out the reaction adenine + H2O + H(+) = hypoxanthine + NH4(+). The chain is Adenine deaminase 1 from Desulfotalea psychrophila (strain LSv54 / DSM 12343).